The chain runs to 478 residues: MAPKKKGKKGKAKGTPIVDGLAPEDMSKEQVEEHVSRIREELDREREERNYFQLERDKIHTFWEITRRQLEEKKAELRNKDREMEEAEERHQVEIKVYKQKVKHLLYEHQNNLTEMKAEGTVVMKLAQKEHRIQESVLRKDMRALKVELKEQELASEVVVKNLRLKHTEEITRMRNDFERQVREIEAKYDKKMKMLRDELDLRRKTELHEVEERKNGQIHTLMQRHEEAFTDIKNYYNDITLNNLALINSLKEQMEDMRKKEDHLEREMAEVSGQNKRLADPLQKAREEMSEMQKQLANYERDKQILLCTKARLKVREKELKDLQWEHEVLEQRFTKVQQERDELYRKFTAAIQEVQQKTGFKNLVLERKLQALSAAVEKKEVQFNEVLAASNLDPAALTLVSRKLEDVLESKNSTIKDLQYELAQVCKAHNDLLRTYEAKLLAFGIPLDNVGFKPLETAVIGQTLGQGPAGLVGTPT.

The segment covering 1–12 (MAPKKKGKKGKA) has biased composition (basic residues). Residues 1–33 (MAPKKKGKKGKAKGTPIVDGLAPEDMSKEQVEE) are disordered. The regulates microtubule-binding stretch occupies residues 1 to 114 (MAPKKKGKKG…LLYEHQNNLT (114 aa)). A microtubule-binding region spans residues 115–258 (EMKAEGTVVM…NSLKEQMEDM (144 aa)). The stretch at 242-427 (LNNLALINSL…KDLQYELAQV (186 aa)) forms a coiled coil. Residues 357–478 (QQKTGFKNLV…GPAGLVGTPT (122 aa)) are interaction with SMO.

Belongs to the DRC4 family. In terms of assembly, component of the nexin-dynein regulatory complex (N-DRC). Interacts with microtubules. Interacts with SMO. Interacts (via coiled-coil domains) with RAB3B (in GTP-bound form). Interacts with DRC1. Interacts with DRC7. As to expression, expressed in respiratory epithelial cells (at protein level). Expressed in the heart, skeletal muscle, pancreas, liver, brain, trachea and lung. Weakly or not expressed in placenta and kidney.

The protein resides in the cytoplasm. It is found in the cytoskeleton. It localises to the cell projection. The protein localises to the cilium. Its subcellular location is the flagellum. The protein resides in the cilium axoneme. It is found in the cilium basal body. It localises to the golgi apparatus. The protein localises to the flagellum axoneme. In terms of biological role, component of the nexin-dynein regulatory complex (N-DRC), a key regulator of ciliary/flagellar motility which maintains the alignment and integrity of the distal axoneme and regulates microtubule sliding in motile axonemes. Plays an important role in the assembly of the N-DRC linker. Plays dual roles at both the primary (or non-motile) cilia to regulate hedgehog signaling and in motile cilia to coordinate cilia movement. Required for proper motile cilia functioning. Positively regulates ciliary smoothened (SMO)-dependent Hedgehog (Hh) signaling pathway by facilitating the trafficking of SMO into the cilium and the stimulation of SMO activity in a GRK2-dependent manner. The polypeptide is Dynein regulatory complex subunit 4 (GAS8) (Homo sapiens (Human)).